The following is a 109-amino-acid chain: B melanoma antigen 3 (109 aa).

The N-terminal stretch at 1–17 (MAAGVVFLALSAQLLQA) is a signal peptide.

The protein belongs to the BAGE family. Not expressed in normal tissues except in testis. Expressed in melanoma, bladder and lung carcinomas.

The protein resides in the secreted. In terms of biological role, unknown. Candidate gene encoding tumor antigens. The chain is B melanoma antigen 3 (BAGE3) from Homo sapiens (Human).